Reading from the N-terminus, the 359-residue chain is tRNA-specific 2-thiouridylase MnmA (359 aa).

Residues 9–16 and methionine 35 contribute to the ATP site; that span reads GISGGVDS. The segment at 95–97 is interaction with target base in tRNA; that stretch reads NPD. The active-site Nucleophile is cysteine 100. Residues cysteine 100 and cysteine 197 are joined by a disulfide bond. Glycine 124 contributes to the ATP binding site. The segment at 147 to 149 is interaction with tRNA; sequence KDQ. Cysteine 197 (cysteine persulfide intermediate) is an active-site residue. An interaction with tRNA region spans residues 309-310; it reads RY.

The protein belongs to the MnmA/TRMU family.

It localises to the cytoplasm. It carries out the reaction S-sulfanyl-L-cysteinyl-[protein] + uridine(34) in tRNA + AH2 + ATP = 2-thiouridine(34) in tRNA + L-cysteinyl-[protein] + A + AMP + diphosphate + H(+). Functionally, catalyzes the 2-thiolation of uridine at the wobble position (U34) of tRNA, leading to the formation of s(2)U34. This Francisella tularensis subsp. tularensis (strain FSC 198) protein is tRNA-specific 2-thiouridylase MnmA.